A 160-amino-acid chain; its full sequence is MSLATLDATQHPNLPASAATLFKAKAQNKLSFEQIAQHIGRNEVATAALFYGQAKASPEDIQKLSELLNISPQVLEEQLSGFPDRGRSVEMPPKEPLIYRLYEIVQNYGYAYKAVLNEKFGDGIMSAISFSTKVEKETDADGNNWAVITLRGKWLPFSRF.

Catalysis depends on residues Arg100, Glu103, and Ser126.

The protein belongs to the cyanase family.

It carries out the reaction cyanate + hydrogencarbonate + 3 H(+) = NH4(+) + 2 CO2. In terms of biological role, catalyzes the reaction of cyanate with bicarbonate to produce ammonia and carbon dioxide. In Neosartorya fischeri (strain ATCC 1020 / DSM 3700 / CBS 544.65 / FGSC A1164 / JCM 1740 / NRRL 181 / WB 181) (Aspergillus fischerianus), this protein is Cyanate hydratase.